The chain runs to 987 residues: UvrABC system protein A (987 aa).

Position 33–40 (33–40 (GLSGSGKS)) interacts with ATP. The C4-type zinc-finger motif lies at 255-282 (CPVCDYSLPELEPRLFSFNAPVGACPSC). ABC transporter domains follow at residues 312 to 589 (WDRR…PRSL) and 609 to 938 (PNPK…QFLA). 642–649 (GVSGSGKS) is an ATP binding site. The segment at 741–767 (CEACQGDGMIKVEMHFLPDVYVPCDVC) adopts a C4-type zinc-finger fold. The tract at residues 948–987 (ETRPAAMANKPDARPPRKVKPEKVAKAAKSATKKTAKKAS) is disordered. Residues 958 to 972 (PDARPPRKVKPEKVA) are compositionally biased toward basic and acidic residues. Basic residues predominate over residues 978-987 (ATKKTAKKAS).

This sequence belongs to the ABC transporter superfamily. UvrA family. Forms a heterotetramer with UvrB during the search for lesions.

It is found in the cytoplasm. Its function is as follows. The UvrABC repair system catalyzes the recognition and processing of DNA lesions. UvrA is an ATPase and a DNA-binding protein. A damage recognition complex composed of 2 UvrA and 2 UvrB subunits scans DNA for abnormalities. When the presence of a lesion has been verified by UvrB, the UvrA molecules dissociate. The chain is UvrABC system protein A from Xanthomonas axonopodis pv. citri (strain 306).